Consider the following 106-residue polypeptide: uncharacterized protein (106 aa).

Positions 1–46 (MPQGGTPCRRARRAVRPERPTSPEGVFCVGGGAPGGPPDTTNTVSA) are disordered.

This is an uncharacterized protein from Gracula (BFDV).